The sequence spans 391 residues: DNA replication and repair protein RecF (391 aa).

ATP is bound at residue 30-37 (GLNGQGKT).

Belongs to the RecF family.

The protein localises to the cytoplasm. The RecF protein is involved in DNA metabolism; it is required for DNA replication and normal SOS inducibility. RecF binds preferentially to single-stranded, linear DNA. It also seems to bind ATP. The sequence is that of DNA replication and repair protein RecF from Kineococcus radiotolerans (strain ATCC BAA-149 / DSM 14245 / SRS30216).